The sequence spans 124 residues: Small ribosomal subunit protein uS12 (124 aa).

A 3-methylthioaspartic acid modification is found at Asp-89.

It belongs to the universal ribosomal protein uS12 family. In terms of assembly, part of the 30S ribosomal subunit. Contacts proteins S8 and S17. May interact with IF1 in the 30S initiation complex.

With S4 and S5 plays an important role in translational accuracy. In terms of biological role, interacts with and stabilizes bases of the 16S rRNA that are involved in tRNA selection in the A site and with the mRNA backbone. Located at the interface of the 30S and 50S subunits, it traverses the body of the 30S subunit contacting proteins on the other side and probably holding the rRNA structure together. The combined cluster of proteins S8, S12 and S17 appears to hold together the shoulder and platform of the 30S subunit. The protein is Small ribosomal subunit protein uS12 of Campylobacter hominis (strain ATCC BAA-381 / DSM 21671 / CCUG 45161 / LMG 19568 / NCTC 13146 / CH001A).